The following is a 372-amino-acid chain: Citrate synthase 2 (372 aa).

Residue His257 is part of the active site. Position 284 is a phosphoserine (Ser284). Residue Asp308 is part of the active site.

The protein belongs to the citrate synthase family. Homodimer.

It carries out the reaction oxaloacetate + acetyl-CoA + H2O = citrate + CoA + H(+). The protein operates within carbohydrate metabolism; tricarboxylic acid cycle; isocitrate from oxaloacetate: step 1/2. Functionally, might regulate the synthesis and function of enzymes involved in later enzymatic steps of Krebs cycle. Loss in activity results in sporulation defect. The polypeptide is Citrate synthase 2 (citZ) (Bacillus subtilis (strain 168)).